The sequence spans 303 residues: sn-1-specific diacylglycerol lipase ABHD11 (303 aa).

Residues 1 to 22 (MLRWTRAWTAPYRGIGLSNSSF) constitute a mitochondrion transit peptide. The AB hydrolase-1 domain occupies 55–290 (PALVFLHGLF…NAGHWVHSDR (236 aa)). At Lys-75 the chain carries N6-succinyllysine. Active-site charge relay system residues include Ser-129, Asp-225, and His-284.

This sequence belongs to the AB hydrolase superfamily. As to quaternary structure, interacts with OGDH and DLST; this interaction maintains the functional lipoylation of the 2-oxoglutarate dehydrogenase complex. In terms of processing, phosphorylated.

It localises to the mitochondrion. The protein resides in the mitochondrion matrix. It catalyses the reaction a 1,3-diacyl-sn-glycerol + H2O = a 1-acyl-sn-glycerol + a fatty acid + H(+). It carries out the reaction 1-octadecanoyl-2-(9Z-octadecenoyl)-sn-glycerol + H2O = 2-(9Z-octadecenoyl)-glycerol + octadecanoate + H(+). The enzyme catalyses 1-octadecanoyl-2-(4Z,7Z,10Z,13Z,16Z,19Z-docosahexaenoyl)-sn-glycerol + H2O = 2-(4Z,7Z,10Z,13Z,16Z,19Z-docosahexaenoyl)-glycerol + octadecanoate + H(+). The catalysed reaction is a 1,2-diacyl-sn-glycerol + H2O = a 2-acylglycerol + a fatty acid + H(+). It catalyses the reaction 1,2-didecanoylglycerol + H2O = decanoylglycerol + decanoate + H(+). It carries out the reaction 1-octadecanoyl-2-(5Z,8Z,11Z,14Z-eicosatetraenoyl)-sn-glycerol + H2O = 2-(5Z,8Z,11Z,14Z-eicosatetraenoyl)-glycerol + octadecanoate + H(+). With respect to regulation, the diacylglycerol lipase activity can be modulated by phosphorylation by cAMP-dependent protein kinase. Its function is as follows. Catalyzes the hydrolysis of diacylglycerol in vitro and may function as a key regulator in lipid metabolism, namely by regulating the intracellular levels of diacylglycerol. 1,2-diacyl-sn-glycerols are the preferred substrate over 1,3-diacyl-sn-glycerols. The enzyme hydrolyzes stearate in preference to palmitate from the sn-1 position of 1,2-diacyl-sn-glycerols. Maintains the functional lipoylation of the 2-oxoglutarate dehydrogenase complex (OGDHc) through its interaction with the OGDHc by preventing the formation of lipoyl adducts. In addition, is also required for the expansion and differentiation of embryonic stem cells (ESCs). In Bos taurus (Bovine), this protein is sn-1-specific diacylglycerol lipase ABHD11.